Here is a 332-residue protein sequence, read N- to C-terminus: UPF0194 membrane protein YbhG (332 aa).

A signal peptide spans 1 to 16 (MMKKTVVIGLAVVVLA). Residues 108–209 (EEIAQAAAAV…LNLQDSTLIA (102 aa)) adopt a coiled-coil conformation.

This sequence belongs to the UPF0194 family.

Its subcellular location is the periplasm. The sequence is that of UPF0194 membrane protein YbhG from Shigella dysenteriae serotype 1 (strain Sd197).